Consider the following 430-residue polypeptide: Adenylosuccinate synthetase (430 aa).

GTP-binding positions include 12–18 (GDEGKGK) and 40–42 (GHT). Aspartate 13 functions as the Proton acceptor in the catalytic mechanism. Mg(2+)-binding residues include aspartate 13 and glycine 40. Residues 13 to 16 (DEGK), 38 to 41 (NAGH), threonine 130, arginine 144, glutamine 224, and threonine 239 contribute to the IMP site. Histidine 41 acts as the Proton donor in catalysis. A disordered region spans residues 277-298 (PFPTEQDNETGRKIGERGREFG). Positions 285-296 (ETGRKIGERGRE) are enriched in basic and acidic residues. 299-305 (TNTGRPR) contributes to the substrate binding site. Arginine 303 is a binding site for IMP. Residues arginine 305, 331-333 (KLD), and 413-415 (STS) contribute to the GTP site.

Belongs to the adenylosuccinate synthetase family. In terms of assembly, homodimer. Mg(2+) serves as cofactor.

The protein resides in the cytoplasm. It catalyses the reaction IMP + L-aspartate + GTP = N(6)-(1,2-dicarboxyethyl)-AMP + GDP + phosphate + 2 H(+). It functions in the pathway purine metabolism; AMP biosynthesis via de novo pathway; AMP from IMP: step 1/2. In terms of biological role, plays an important role in the de novo pathway of purine nucleotide biosynthesis. Catalyzes the first committed step in the biosynthesis of AMP from IMP. The polypeptide is Adenylosuccinate synthetase (Bradyrhizobium sp. (strain BTAi1 / ATCC BAA-1182)).